A 942-amino-acid polypeptide reads, in one-letter code: Lambda-carrageenase (942 aa).

Positions 1–25 (MKIKILSAMVASSLLIGCVIPTVKA) are cleaved as a signal peptide.

As to quaternary structure, monomer.

The protein localises to the secreted. The catalysed reaction is Endohydrolysis of (1-&gt;4)-beta-linkages in the backbone of lambda-carrageenan, resulting in the tetrasaccharide alpha-D-Galp2,6S2-(1-&gt;3)-beta-D-Galp2S-(1-&gt;4)-alpha-D-Galp2,6S2-(1-&gt;3)-D-Galp2S.. Functionally, hydrolyzes lambda-carrageenan with inversion of anomeric configuration. Does not hydrolyze iota- and kappa-carrageenans, agarose or porphyran. This chain is Lambda-carrageenase, found in Pseudoalteromonas carrageenovora (Alteromonas carrageenovora).